A 104-amino-acid polypeptide reads, in one-letter code: MEFVTTETVPGREITESLGVARGNTVKARNVGRDITQSIRNITGGELKAYSELLTDARDDALDRMAEDARSMGADAVVNVRLESSEIANGGSEVIAYGTAVTLA.

This sequence belongs to the UPF0145 family.

This is UPF0145 protein VNG_2432C from Halobacterium salinarum (strain ATCC 700922 / JCM 11081 / NRC-1) (Halobacterium halobium).